We begin with the raw amino-acid sequence, 223 residues long: Ribose-5-phosphate isomerase A (223 aa).

Substrate is bound by residues 28–31 (TGST), 81–84 (DGAD), and 94–97 (KGGG). The active-site Proton acceptor is Glu103. Position 121 (Lys121) interacts with substrate.

Belongs to the ribose 5-phosphate isomerase family. As to quaternary structure, homodimer.

It carries out the reaction aldehydo-D-ribose 5-phosphate = D-ribulose 5-phosphate. It functions in the pathway carbohydrate degradation; pentose phosphate pathway; D-ribose 5-phosphate from D-ribulose 5-phosphate (non-oxidative stage): step 1/1. Its function is as follows. Catalyzes the reversible conversion of ribose-5-phosphate to ribulose 5-phosphate. This is Ribose-5-phosphate isomerase A from Ruthia magnifica subsp. Calyptogena magnifica.